We begin with the raw amino-acid sequence, 371 residues long: N-acetyldiaminopimelate deacetylase (371 aa).

The active site involves D68. E127 (proton acceptor) is an active-site residue.

The protein belongs to the peptidase M20A family. N-acetyldiaminopimelate deacetylase subfamily.

It carries out the reaction N-acetyl-(2S,6S)-2,6-diaminopimelate + H2O = (2S,6S)-2,6-diaminopimelate + acetate. It functions in the pathway amino-acid biosynthesis; L-lysine biosynthesis via DAP pathway; LL-2,6-diaminopimelate from (S)-tetrahydrodipicolinate (acetylase route): step 3/3. Catalyzes the conversion of N-acetyl-diaminopimelate to diaminopimelate and acetate. This chain is N-acetyldiaminopimelate deacetylase, found in Halalkalibacterium halodurans (strain ATCC BAA-125 / DSM 18197 / FERM 7344 / JCM 9153 / C-125) (Bacillus halodurans).